A 131-amino-acid polypeptide reads, in one-letter code: Global transcriptional regulator Spx (131 aa).

A disulfide bridge links C10 with C13.

Belongs to the ArsC family. Spx subfamily. As to quaternary structure, interacts with the C-terminal domain of the alpha subunit of the RNAP.

The protein localises to the cytoplasm. Functionally, global transcriptional regulator that plays a key role in stress response and exerts either positive or negative regulation of genes. Acts by interacting with the C-terminal domain of the alpha subunit of the RNA polymerase (RNAP). This interaction can enhance binding of RNAP to the promoter region of target genes and stimulate their transcription, or block interaction of RNAP with activator. The chain is Global transcriptional regulator Spx from Staphylococcus saprophyticus subsp. saprophyticus (strain ATCC 15305 / DSM 20229 / NCIMB 8711 / NCTC 7292 / S-41).